The chain runs to 336 residues: 4-hydroxy-3-methylbut-2-enyl diphosphate reductase (336 aa).

C37 provides a ligand contact to [4Fe-4S] cluster. H66 and H99 together coordinate (2E)-4-hydroxy-3-methylbut-2-enyl diphosphate. Dimethylallyl diphosphate-binding residues include H66 and H99. H66 and H99 together coordinate isopentenyl diphosphate. C121 contributes to the [4Fe-4S] cluster binding site. H149 serves as a coordination point for (2E)-4-hydroxy-3-methylbut-2-enyl diphosphate. H149 is a dimethylallyl diphosphate binding site. H149 contributes to the isopentenyl diphosphate binding site. E151 serves as the catalytic Proton donor. Residue T189 coordinates (2E)-4-hydroxy-3-methylbut-2-enyl diphosphate. Position 219 (C219) interacts with [4Fe-4S] cluster. The (2E)-4-hydroxy-3-methylbut-2-enyl diphosphate site is built by S247, S248, N249, and S292. 4 residues coordinate dimethylallyl diphosphate: S247, S248, N249, and S292. S247, S248, N249, and S292 together coordinate isopentenyl diphosphate.

Belongs to the IspH family. It depends on [4Fe-4S] cluster as a cofactor.

It carries out the reaction isopentenyl diphosphate + 2 oxidized [2Fe-2S]-[ferredoxin] + H2O = (2E)-4-hydroxy-3-methylbut-2-enyl diphosphate + 2 reduced [2Fe-2S]-[ferredoxin] + 2 H(+). It catalyses the reaction dimethylallyl diphosphate + 2 oxidized [2Fe-2S]-[ferredoxin] + H2O = (2E)-4-hydroxy-3-methylbut-2-enyl diphosphate + 2 reduced [2Fe-2S]-[ferredoxin] + 2 H(+). The protein operates within isoprenoid biosynthesis; dimethylallyl diphosphate biosynthesis; dimethylallyl diphosphate from (2E)-4-hydroxy-3-methylbutenyl diphosphate: step 1/1. It functions in the pathway isoprenoid biosynthesis; isopentenyl diphosphate biosynthesis via DXP pathway; isopentenyl diphosphate from 1-deoxy-D-xylulose 5-phosphate: step 6/6. In terms of biological role, catalyzes the conversion of 1-hydroxy-2-methyl-2-(E)-butenyl 4-diphosphate (HMBPP) into a mixture of isopentenyl diphosphate (IPP) and dimethylallyl diphosphate (DMAPP). Acts in the terminal step of the DOXP/MEP pathway for isoprenoid precursor biosynthesis. The polypeptide is 4-hydroxy-3-methylbut-2-enyl diphosphate reductase (Rhodococcus jostii (strain RHA1)).